Here is a 331-residue protein sequence, read N- to C-terminus: Tetraacyldisaccharide 4'-kinase (331 aa).

60 to 67 (TIGGTGKT) is a binding site for ATP.

The protein belongs to the LpxK family.

It carries out the reaction a lipid A disaccharide + ATP = a lipid IVA + ADP + H(+). It participates in glycolipid biosynthesis; lipid IV(A) biosynthesis; lipid IV(A) from (3R)-3-hydroxytetradecanoyl-[acyl-carrier-protein] and UDP-N-acetyl-alpha-D-glucosamine: step 6/6. In terms of biological role, transfers the gamma-phosphate of ATP to the 4'-position of a tetraacyldisaccharide 1-phosphate intermediate (termed DS-1-P) to form tetraacyldisaccharide 1,4'-bis-phosphate (lipid IVA). The protein is Tetraacyldisaccharide 4'-kinase of Pseudomonas syringae pv. tomato (strain ATCC BAA-871 / DC3000).